Consider the following 625-residue polypeptide: Endoglucanase 13 (625 aa).

The first 34 residues, 1-34 (MAATMNKTPATTFLLIPAAASLVLLLAAAASVEA), serve as a signal peptide directing secretion. Asp-91 functions as the Nucleophile in the catalytic mechanism. The active site involves His-427. Residue Asn-440 is glycosylated (N-linked (GlcNAc...) asparagine). Catalysis depends on residues Asp-479 and Glu-488. A disordered region spans residues 509 to 530 (ADNTPEYTPAPNAPSPSNGGSP).

The protein belongs to the glycosyl hydrolase 9 (cellulase E) family.

It localises to the secreted. The catalysed reaction is Endohydrolysis of (1-&gt;4)-beta-D-glucosidic linkages in cellulose, lichenin and cereal beta-D-glucans.. The polypeptide is Endoglucanase 13 (GLU6) (Oryza sativa subsp. indica (Rice)).